Consider the following 367-residue polypeptide: Glutamate 5-kinase (367 aa).

ATP is bound at residue Lys17. Substrate contacts are provided by Ser57, Asp144, and Asn156. ATP contacts are provided by residues Ser176 to Asp177 and Thr217 to Lys223. The PUA domain occupies Val279 to Pro357.

It belongs to the glutamate 5-kinase family.

It is found in the cytoplasm. It catalyses the reaction L-glutamate + ATP = L-glutamyl 5-phosphate + ADP. It participates in amino-acid biosynthesis; L-proline biosynthesis; L-glutamate 5-semialdehyde from L-glutamate: step 1/2. Its function is as follows. Catalyzes the transfer of a phosphate group to glutamate to form L-glutamate 5-phosphate. The protein is Glutamate 5-kinase of Mycobacterium leprae (strain Br4923).